A 262-amino-acid chain; its full sequence is Type III pantothenate kinase (262 aa).

12-19 is a binding site for ATP; the sequence is DIGNTSIA. Residues Tyr94 and 109–112 contribute to the substrate site; that span reads GSDV. Residue Asp111 is the Proton acceptor of the active site. Position 132 (Asp132) interacts with K(+). Residue Thr135 participates in ATP binding. Thr187 contributes to the substrate binding site.

This sequence belongs to the type III pantothenate kinase family. Homodimer. Requires NH4(+) as cofactor. The cofactor is K(+).

The protein localises to the cytoplasm. It carries out the reaction (R)-pantothenate + ATP = (R)-4'-phosphopantothenate + ADP + H(+). It participates in cofactor biosynthesis; coenzyme A biosynthesis; CoA from (R)-pantothenate: step 1/5. In terms of biological role, catalyzes the phosphorylation of pantothenate (Pan), the first step in CoA biosynthesis. The chain is Type III pantothenate kinase from Borrelia garinii subsp. bavariensis (strain ATCC BAA-2496 / DSM 23469 / PBi) (Borreliella bavariensis).